The sequence spans 106 residues: ATP-dependent Clp protease adapter protein ClpS (106 aa).

Residues 1-10 are compositionally biased toward basic and acidic residues; that stretch reads MSQKTVHDQD. Residues 1–23 form a disordered region; it reads MSQKTVHDQDNALLLETGNTKVA.

The protein belongs to the ClpS family. Binds to the N-terminal domain of the chaperone ClpA.

In terms of biological role, involved in the modulation of the specificity of the ClpAP-mediated ATP-dependent protein degradation. In Xylella fastidiosa (strain M23), this protein is ATP-dependent Clp protease adapter protein ClpS.